We begin with the raw amino-acid sequence, 256 residues long: Trans-aconitate 2-methyltransferase (256 aa).

This sequence belongs to the methyltransferase superfamily. Tam family.

It is found in the cytoplasm. It catalyses the reaction trans-aconitate + S-adenosyl-L-methionine = (E)-3-(methoxycarbonyl)pent-2-enedioate + S-adenosyl-L-homocysteine. Functionally, catalyzes the S-adenosylmethionine monomethyl esterification of trans-aconitate. This Rhodopseudomonas palustris (strain HaA2) protein is Trans-aconitate 2-methyltransferase.